Here is a 49-residue protein sequence, read N- to C-terminus: Feruloyl esterase A (49 aa).

Belongs to the AB hydrolase superfamily. FaeA family.

It localises to the secreted. The catalysed reaction is feruloyl-polysaccharide + H2O = ferulate + polysaccharide.. Its function is as follows. Involved in degradation of plant cell walls. Hydrolyzes the feruloyl-arabinose ester bond in arabinoxylans as well as the feruloyl-galactose and feruloyl-arabinose ester bonds in pectin. Active against methyl esters of sinapate (MSA), but not caffeate (MCA). This is Feruloyl esterase A from Talaromyces stipitatus (strain ATCC 10500 / CBS 375.48 / QM 6759 / NRRL 1006) (Penicillium stipitatum).